The primary structure comprises 244 residues: Phosphoadenosine 5'-phosphosulfate reductase (244 aa).

Cys239 functions as the Nucleophile; cysteine thiosulfonate intermediate in the catalytic mechanism.

The protein belongs to the PAPS reductase family. CysH subfamily.

Its subcellular location is the cytoplasm. It catalyses the reaction [thioredoxin]-disulfide + sulfite + adenosine 3',5'-bisphosphate + 2 H(+) = [thioredoxin]-dithiol + 3'-phosphoadenylyl sulfate. It functions in the pathway sulfur metabolism; hydrogen sulfide biosynthesis; sulfite from sulfate: step 3/3. Functionally, catalyzes the formation of sulfite from phosphoadenosine 5'-phosphosulfate (PAPS) using thioredoxin as an electron donor. The protein is Phosphoadenosine 5'-phosphosulfate reductase of Buchnera aphidicola subsp. Acyrthosiphon pisum (strain 5A).